A 502-amino-acid polypeptide reads, in one-letter code: Adenylate cyclase (502 aa).

Residues 1 to 25 lie on the Cytoplasmic side of the membrane; the sequence is MGDFCRRVDCKAMKFFALRSSIRTQ. A helical membrane pass occupies residues 26 to 46; the sequence is IMASTTLLILALIGAIVTVWA. Over 47-203 the chain is Lumenal, thylakoid; sequence KSESTLYHQE…RKVNLAVTNA (157 aa). The helical transmembrane segment at 204–226 threads the bilayer; the sequence is VNQALVVGFAGLNIGWICAYFLA. The region spanning 227–280 is the HAMP domain; that stretch reads QHLSDPVRRLQISVAKIAGGDLQHRADIHSRADEIGALATSVNEMSAALQISFN. Over 227-502 the chain is Cytoplasmic; the sequence is QHLSDPVRRL…EAISIYEVKA (276 aa). The 132-residue stretch at 320-451 folds into the Guanylate cyclase domain; the sequence is TILFCDIRGY…DAVNVASRIE (132 aa). Mg(2+) contacts are provided by D325 and D369.

This sequence belongs to the adenylyl cyclase class-3 family. Requires Mg(2+) as cofactor.

The protein localises to the cellular thylakoid membrane. It catalyses the reaction ATP = 3',5'-cyclic AMP + diphosphate. Its function is as follows. May function as a membrane-localized receptor protein. This chain is Adenylate cyclase (cya), found in Anabaena cylindrica.